Reading from the N-terminus, the 153-residue chain is Arginine repressor (153 aa).

The protein belongs to the ArgR family.

The protein resides in the cytoplasm. It functions in the pathway amino-acid biosynthesis; L-arginine biosynthesis [regulation]. Functionally, regulates arginine biosynthesis genes. The polypeptide is Arginine repressor (Acetivibrio thermocellus (strain ATCC 27405 / DSM 1237 / JCM 9322 / NBRC 103400 / NCIMB 10682 / NRRL B-4536 / VPI 7372) (Clostridium thermocellum)).